Consider the following 67-residue polypeptide: uncharacterized protein (67 aa).

The helical transmembrane segment at 26–46 (CYLLFCFLECFLNLFKKCGVF) threads the bilayer.

This sequence belongs to the plectrovirus ORF11 family.

It is found in the host membrane. This is an uncharacterized protein from Spiroplasma virus SpV1-C74 (SpV1).